Here is a 369-residue protein sequence, read N- to C-terminus: Translocating chain-associated membrane protein 1-like 1 (369 aa).

Residues 1–29 (MGLRKKSTKNPPVLSQEFILQNHADIVSC) are Cytoplasmic-facing. Residues 30–50 (VGMFFLLGLVFEGTAEASIVF) traverse the membrane as a helical segment. Over 51–81 (LTLQHSVAVPAAEEQATGSKSLYYYGVKDLA) the chain is Lumenal. A helical transmembrane segment spans residues 82–102 (TVFFYMLVAIIIHATIQEYVL). At 103–121 (DKINKRMQFTKAKQNKFNE) the chain is on the cytoplasmic side. The region spanning 117 to 326 (NKFNESGQFS…TLWLQRWVED (210 aa)) is the TLC domain. The helical transmembrane segment at 122-142 (SGQFSVFYFFSCIWGTFILIS) threads the bilayer. Over 143 to 164 (ENCLSDPTLIWKARPHSMMTFQ) the chain is Lumenal. A helical transmembrane segment spans residues 165–185 (MKFFYISQLAYWFHAFPELYF). Residues 186–196 (QKTKKQDIPRQ) lie on the Cytoplasmic side of the membrane. The helical transmembrane segment at 197–215 (LVYIGLHLFHITGAYLLYL) threads the bilayer. Residues 216-219 (NHLG) are Lumenal-facing. Residues 220-242 (LLLLVLHYFVELLSHMCGLFYFS) form a helical membrane-spanning segment. The Cytoplasmic segment spans residues 243–249 (DEKYQKG). A helical membrane pass occupies residues 250 to 270 (ISLWAIVFILGRLVTLIVSVL). Residues 271–297 (TVGFHLAGSQNRNPDALTGNVNVLAAK) are Lumenal-facing. A helical membrane pass occupies residues 298–318 (IAVLSSSCTIQAYVTWNLITL). The Cytoplasmic segment spans residues 319-369 (WLQRWVEDSNIQASCMKKKRSRSSKKRTENGVGVETSNRVDCPPKRKEKSS). A disordered region spans residues 335–369 (KKKRSRSSKKRTENGVGVETSNRVDCPPKRKEKSS). Basic and acidic residues predominate over residues 360 to 369 (CPPKRKEKSS).

Belongs to the TRAM family.

The protein localises to the endoplasmic reticulum membrane. Its function is as follows. Stimulatory or required for the translocation of secretory proteins across the ER membrane. In Homo sapiens (Human), this protein is Translocating chain-associated membrane protein 1-like 1 (TRAM1L1).